We begin with the raw amino-acid sequence, 379 residues long: Glutamate 5-kinase (379 aa).

Lysine 14 provides a ligand contact to ATP. 3 residues coordinate substrate: serine 54, aspartate 141, and asparagine 153. Residues 173 to 174 and 215 to 221 each bind ATP; these read TD and TGGMATK. The PUA domain occupies 280–358; that stretch reads KGRLLLDIGA…DEIEPLLGYD (79 aa).

Belongs to the glutamate 5-kinase family.

It localises to the cytoplasm. The enzyme catalyses L-glutamate + ATP = L-glutamyl 5-phosphate + ADP. Its pathway is amino-acid biosynthesis; L-proline biosynthesis; L-glutamate 5-semialdehyde from L-glutamate: step 1/2. Catalyzes the transfer of a phosphate group to glutamate to form L-glutamate 5-phosphate. In Shewanella amazonensis (strain ATCC BAA-1098 / SB2B), this protein is Glutamate 5-kinase.